The chain runs to 257 residues: Zinc transporter ZupT (257 aa).

A run of 8 helical transmembrane segments spans residues 5 to 25 (LILTLLAGAATFIGAFLGVLG), 32 to 52 (VLAFSLGFAAGIMLLISLMEM), 61 to 81 (GMSPVLGYGMFIIGLLGYFGL), 109 to 129 (AILLTLGISLHNFPEGIATFV), 137 to 157 (LGFGIALAVALHNIPEGLAVA), 171 to 191 (IFWAGISGMAEILGGVLAWLI), 195 to 215 (LVSPIVMAAIMAAVAGIMVAL), and 236 to 256 (GVLCGMSIMGLSLVILQTIGI). 2 residues coordinate Fe(2+): Asn-120 and Glu-123. Glu-123 and His-148 together coordinate Zn(2+). Fe(2+) contacts are provided by Asn-149, Glu-152, and Glu-181. A Zn(2+)-binding site is contributed by Glu-152.

It belongs to the ZIP transporter (TC 2.A.5) family. ZupT subfamily.

It is found in the cell inner membrane. The catalysed reaction is Zn(2+)(in) = Zn(2+)(out). Functionally, mediates zinc uptake. May also transport other divalent cations. The chain is Zinc transporter ZupT from Salmonella agona (strain SL483).